Reading from the N-terminus, the 210-residue chain is Large ribosomal subunit protein uL3 (210 aa).

The protein belongs to the universal ribosomal protein uL3 family. As to quaternary structure, part of the 50S ribosomal subunit. Forms a cluster with proteins L14 and L19.

One of the primary rRNA binding proteins, it binds directly near the 3'-end of the 23S rRNA, where it nucleates assembly of the 50S subunit. The protein is Large ribosomal subunit protein uL3 of Geobacter sulfurreducens (strain ATCC 51573 / DSM 12127 / PCA).